Reading from the N-terminus, the 761-residue chain is Polyribonucleotide nucleotidyltransferase (761 aa).

Residues Asp532 and Asp538 each coordinate Mg(2+). The KH domain occupies 598 to 657; the sequence is PRVISVQIPVDKIGELIGPKGKTINAIQDETGADISIDEDGTVYIGAVDGPSAEAARAQV. Positions 669 to 741 constitute an S1 motif domain; the sequence is GEQFLGTVVK…DRGKLSLAPV (73 aa).

This sequence belongs to the polyribonucleotide nucleotidyltransferase family. Mg(2+) is required as a cofactor.

It localises to the cytoplasm. The enzyme catalyses RNA(n+1) + phosphate = RNA(n) + a ribonucleoside 5'-diphosphate. Functionally, involved in mRNA degradation. Catalyzes the phosphorolysis of single-stranded polyribonucleotides processively in the 3'- to 5'-direction. The protein is Polyribonucleotide nucleotidyltransferase of Leifsonia xyli subsp. xyli (strain CTCB07).